Consider the following 260-residue polypeptide: Large ribosomal subunit protein uL2 (260 aa).

Residues 208–230 are disordered; sequence EHPHGGGNHQHIGHPSTVRRDAS.

Belongs to the universal ribosomal protein uL2 family.

It localises to the cytoplasm. In Caenorhabditis elegans, this protein is Large ribosomal subunit protein uL2.